The sequence spans 362 residues: tRNA/tmRNA (uracil-C(5))-methyltransferase (362 aa).

Residues Gln182, Tyr210, Asn215, Glu231, and Asp293 each contribute to the S-adenosyl-L-methionine site. Cys318 (nucleophile) is an active-site residue. Glu352 functions as the Proton acceptor in the catalytic mechanism.

This sequence belongs to the class I-like SAM-binding methyltransferase superfamily. RNA M5U methyltransferase family. TrmA subfamily.

It carries out the reaction uridine(54) in tRNA + S-adenosyl-L-methionine = 5-methyluridine(54) in tRNA + S-adenosyl-L-homocysteine + H(+). It catalyses the reaction uridine(341) in tmRNA + S-adenosyl-L-methionine = 5-methyluridine(341) in tmRNA + S-adenosyl-L-homocysteine + H(+). Functionally, dual-specificity methyltransferase that catalyzes the formation of 5-methyluridine at position 54 (m5U54) in all tRNAs, and that of position 341 (m5U341) in tmRNA (transfer-mRNA). In Neisseria gonorrhoeae (strain ATCC 700825 / FA 1090), this protein is tRNA/tmRNA (uracil-C(5))-methyltransferase.